The primary structure comprises 1034 residues: Sodium bicarbonate cotransporter 3 (1034 aa).

Disordered stretches follow at residues methionine 1–serine 31 and histidine 53–valine 99. The Extracellular segment spans residues methionine 1–cysteine 476. 4 positions are modified to phosphoserine: serine 57, serine 60, serine 89, and serine 155. Over residues serine 60–lysine 77 the composition is skewed to basic residues. The span at aspartate 78–proline 90 shows a compositional bias: basic and acidic residues. The N-linked (GlcNAc...) asparagine glycan is linked to asparagine 176. Phosphoserine occurs at positions 238, 250, 260, 263, 268, and 271. The segment covering serine 250 to serine 260 has biased composition (polar residues). The tract at residues serine 250–threonine 276 is disordered. Asparagine 274 carries an N-linked (GlcNAc...) asparagine glycan. Serine 275 and serine 424 each carry phosphoserine. The helical transmembrane segment at leucine 477 to leucine 497 threads the bilayer. Residues leucine 498 to arginine 505 lie on the Cytoplasmic side of the membrane. The helical transmembrane segment at isoleucine 506 to alanine 526 threads the bilayer. Topologically, residues glycine 527 to serine 563 are extracellular. Residues isoleucine 564–valine 584 form a helical membrane-spanning segment. Residues cysteine 585–glutamate 593 lie on the Cytoplasmic side of the membrane. The helical transmembrane segment at alanine 594–leucine 614 threads the bilayer. The Extracellular portion of the chain corresponds to glycine 615–histidine 685. A disulfide bond links cysteine 634 and cysteine 636. Residues asparagine 644, asparagine 654, and asparagine 664 are each glycosylated (N-linked (GlcNAc...) asparagine). A disulfide bridge links cysteine 670 with cysteine 682. The helical transmembrane segment at glycine 686–leucine 706 threads the bilayer. At serine 707 to aspartate 729 the chain is on the cytoplasmic side. The helical transmembrane segment at phenylalanine 730–serine 750 threads the bilayer. Residues proline 751 to asparagine 776 are Extracellular-facing. Residues proline 777–methionine 797 traverse the membrane as a helical segment. The Cytoplasmic portion of the chain corresponds to aspartate 798 to lysine 812. A helical transmembrane segment spans residues leucine 813–leucine 833. Residues phenylalanine 815 to leucine 915 are essential for cell membrane localization and transport activity. Over lysine 834–cysteine 876 the chain is Extracellular. The helical transmembrane segment at leucine 877–leucine 897 threads the bilayer. Residues alanine 898 to leucine 1034 lie on the Cytoplasmic side of the membrane. The interval leucine 918–aspartate 920 is CA2-binding. The tract at residues lysine 926–glutamine 946 is disordered. The residue at position 951 (threonine 951) is a Phosphothreonine. Phosphoserine occurs at positions 960 and 1033. A PDZ-binding motif is present at residues glutamate 1031–leucine 1034.

The protein belongs to the anion exchanger (TC 2.A.31) family. Forms a complex with ATP6V1B1 and NHERF1/EBP50. Interacts in a pH dependent-manner with CA2/carbonic anhydrase 2. Interacts with CFTR through NHERF1/EBP50. Interacts with USH1C. In terms of tissue distribution, expressed in the spiral ligament throughout the cochlea and in photoreceptors of the outer plexiform layer of the retina (at protein level).

It localises to the basolateral cell membrane. The protein resides in the apical cell membrane. The protein localises to the cell projection. It is found in the stereocilium. Its subcellular location is the cell membrane. It carries out the reaction hydrogencarbonate(in) + Na(+)(in) = hydrogencarbonate(out) + Na(+)(out). With respect to regulation, activity is inhibited by 4,4'-di-isothiocyanatostilbene-2,2'-disulfonic acid (DIDS - an inhibitor of several anion channels and transporters). Functionally, electroneutral sodium- and bicarbonate-dependent cotransporter with a Na(+):HCO3(-) 1:1 stoichiometry. Mediates the sodium-dependent bicarbonate transport important for pH recovery after acid load as well as for regulation of steady-state pH in the duodenum and vascular smooth muscle cells. Plays a key role in macrophage acidification, mediating bicarbonate import into the cytoplasm which is crucial for net acid extrusion and maintenance of cytoplasmic pH during phagocytosis. Provides cellular bicarbonate for de novo purine and pyrimidine synthesis and is a key mediator of de novo nucleotide synthesis downstream of mTORC1 signaling in proliferating cells. May be involved in maintaining locomotor activity, exploratory behavior, and hearing. This chain is Sodium bicarbonate cotransporter 3 (Slc4a7), found in Mus musculus (Mouse).